Here is a 529-residue protein sequence, read N- to C-terminus: Ribonuclease Y (529 aa).

The helical transmembrane segment at 4 to 24 (GLIYISLEVLVACLITALIMY) threads the bilayer. The region spanning 216–297 (LTTRIALPCS…NRIEEVYHRV (82 aa)) is the KH domain. In terms of domain architecture, HD spans 342-435 (ALQHSKEVAL…VCAADALSAG (94 aa)).

This sequence belongs to the RNase Y family.

It is found in the cell membrane. In terms of biological role, endoribonuclease that initiates mRNA decay. The sequence is that of Ribonuclease Y from Helicobacter pylori (strain HPAG1).